Consider the following 250-residue polypeptide: Sulfate transporter CysZ (250 aa).

The next 4 membrane-spanning stretches (helical) occupy residues leucine 26–alanine 46, isoleucine 71–leucine 91, leucine 150–phenylalanine 170, and isoleucine 211–alanine 231.

This sequence belongs to the CysZ family.

The protein localises to the cell inner membrane. In terms of biological role, high affinity, high specificity proton-dependent sulfate transporter, which mediates sulfate uptake. Provides the sulfur source for the cysteine synthesis pathway. The sequence is that of Sulfate transporter CysZ from Pseudomonas fluorescens (strain Pf0-1).